A 188-amino-acid polypeptide reads, in one-letter code: Threonylcarbamoyl-AMP synthase (188 aa).

Residues 3–188 (QLHPSDIKDV…RSGKILRNGQ (186 aa)) enclose the YrdC-like domain.

This sequence belongs to the SUA5 family. TsaC subfamily.

It is found in the cytoplasm. The enzyme catalyses L-threonine + hydrogencarbonate + ATP = L-threonylcarbamoyladenylate + diphosphate + H2O. Its function is as follows. Required for the formation of a threonylcarbamoyl group on adenosine at position 37 (t(6)A37) in tRNAs that read codons beginning with adenine. Catalyzes the conversion of L-threonine, HCO(3)(-)/CO(2) and ATP to give threonylcarbamoyl-AMP (TC-AMP) as the acyladenylate intermediate, with the release of diphosphate. This is Threonylcarbamoyl-AMP synthase from Shewanella oneidensis (strain ATCC 700550 / JCM 31522 / CIP 106686 / LMG 19005 / NCIMB 14063 / MR-1).